Reading from the N-terminus, the 573-residue chain is Acyl-coenzyme A synthetase ACSM1, mitochondrial (573 aa).

Residues Met1 to Arg35 constitute a mitochondrion transit peptide. At Lys81 the chain carries N6-succinyllysine. Lys142 carries the post-translational modification N6-acetyllysine; alternate. Position 142 is an N6-succinyllysine; alternate (Lys142). Lys179 is modified (N6-succinyllysine). Lys200 carries the post-translational modification N6-acetyllysine; alternate. Lys200 carries the N6-succinyllysine; alternate modification. Lys210 is subject to N6-acetyllysine. Thr222 to Lys230 is an ATP binding site. Lys233 and Lys324 each carry N6-succinyllysine. 2 positions are modified to N6-acetyllysine; alternate: Lys352 and Lys387. N6-succinyllysine; alternate is present on residues Lys352 and Lys387. ATP is bound by residues Asp448 and Arg463. Position 501 is an N6-succinyllysine (Lys501). Position 527 is an N6-acetyllysine (Lys527). Position 534 is an N6-acetyllysine; alternate (Lys534). At Lys534 the chain carries N6-succinyllysine; alternate. Lys545 carries the N6-acetyllysine modification. Lys559 is a binding site for ATP.

Belongs to the ATP-dependent AMP-binding enzyme family. Monomer. Requires Mg(2+) as cofactor. It depends on Mn(2+) as a cofactor. In terms of tissue distribution, highly expressed in liver and kidney.

The protein resides in the mitochondrion matrix. It localises to the mitochondrion. The catalysed reaction is a medium-chain fatty acid + ATP + CoA = a medium-chain fatty acyl-CoA + AMP + diphosphate. It carries out the reaction benzoate + ATP + CoA = benzoyl-CoA + AMP + diphosphate. It catalyses the reaction (R)-lipoate + GTP + H(+) = (R)-lipoyl-GMP + diphosphate. The enzyme catalyses octanoate + ATP + CoA = octanoyl-CoA + AMP + diphosphate. The catalysed reaction is decanoate + ATP + CoA = decanoyl-CoA + AMP + diphosphate. It carries out the reaction dodecanoate + ATP + CoA = dodecanoyl-CoA + AMP + diphosphate. It catalyses the reaction tetradecanoate + ATP + CoA = tetradecanoyl-CoA + AMP + diphosphate. The enzyme catalyses hexanoate + ATP + CoA = hexanoyl-CoA + AMP + diphosphate. The catalysed reaction is butanoate + ATP + CoA = butanoyl-CoA + AMP + diphosphate. It carries out the reaction hexadecanoate + ATP + CoA = hexadecanoyl-CoA + AMP + diphosphate. Catalyzes the activation of fatty acids by CoA to produce an acyl-CoA, the first step in fatty acid metabolism. Capable of activating medium-chain fatty acids (e.g. butyric (C4) to decanoic (C10) acids), and certain carboxylate-containing xenobiotics, e.g. benzoate. Also catalyzes the activation of lipoate to lipoyl-nucleoside monophosphate. Activates lipoate with GTP at a 1000-fold higher rate than with ATP and activates both (R)- and (S)-lipoate to the respective lipoyl-GMP, with a preference for (R)-lipoate. The protein is Acyl-coenzyme A synthetase ACSM1, mitochondrial (Acsm1) of Mus musculus (Mouse).